The chain runs to 397 residues: Bifunctional enzyme IspD/IspF (397 aa).

Residues 1–233 (MCAKKYKIAA…KLLFEEPKFR (233 aa)) form a 2-C-methyl-D-erythritol 4-phosphate cytidylyltransferase region. The tract at residues 233–397 (RVGAGYDIHK…VLLHTNFYWK (165 aa)) is 2-C-methyl-D-erythritol 2,4-cyclodiphosphate synthase. Residues aspartate 239 and histidine 241 each coordinate a divalent metal cation. 4-CDP-2-C-methyl-D-erythritol 2-phosphate-binding positions include 239–241 (DIH) and 270–271 (HS). Histidine 278 is an a divalent metal cation binding site. Residues 292-294 (DIG), 368-371 (TTAE), tyrosine 375, and arginine 378 each bind 4-CDP-2-C-methyl-D-erythritol 2-phosphate.

The protein in the N-terminal section; belongs to the IspD/TarI cytidylyltransferase family. IspD subfamily. It in the C-terminal section; belongs to the IspF family. A divalent metal cation serves as cofactor.

It catalyses the reaction 2-C-methyl-D-erythritol 4-phosphate + CTP + H(+) = 4-CDP-2-C-methyl-D-erythritol + diphosphate. It carries out the reaction 4-CDP-2-C-methyl-D-erythritol 2-phosphate = 2-C-methyl-D-erythritol 2,4-cyclic diphosphate + CMP. It participates in isoprenoid biosynthesis; isopentenyl diphosphate biosynthesis via DXP pathway; isopentenyl diphosphate from 1-deoxy-D-xylulose 5-phosphate: step 2/6. It functions in the pathway isoprenoid biosynthesis; isopentenyl diphosphate biosynthesis via DXP pathway; isopentenyl diphosphate from 1-deoxy-D-xylulose 5-phosphate: step 4/6. Functionally, bifunctional enzyme that catalyzes the formation of 4-diphosphocytidyl-2-C-methyl-D-erythritol from CTP and 2-C-methyl-D-erythritol 4-phosphate (MEP) (IspD), and catalyzes the conversion of 4-diphosphocytidyl-2-C-methyl-D-erythritol 2-phosphate (CDP-ME2P) to 2-C-methyl-D-erythritol 2,4-cyclodiphosphate (ME-CPP) with a corresponding release of cytidine 5-monophosphate (CMP) (IspF). In Wolbachia pipientis wMel, this protein is Bifunctional enzyme IspD/IspF.